We begin with the raw amino-acid sequence, 361 residues long: tRNA/tmRNA (uracil-C(5))-methyltransferase (361 aa).

Residues Gln185, Tyr213, Asn218, Glu234, and Asp294 each coordinate S-adenosyl-L-methionine. Residue Cys319 is the Nucleophile of the active site. Glu353 acts as the Proton acceptor in catalysis.

The protein belongs to the class I-like SAM-binding methyltransferase superfamily. RNA M5U methyltransferase family. TrmA subfamily.

It catalyses the reaction uridine(54) in tRNA + S-adenosyl-L-methionine = 5-methyluridine(54) in tRNA + S-adenosyl-L-homocysteine + H(+). The catalysed reaction is uridine(341) in tmRNA + S-adenosyl-L-methionine = 5-methyluridine(341) in tmRNA + S-adenosyl-L-homocysteine + H(+). Functionally, dual-specificity methyltransferase that catalyzes the formation of 5-methyluridine at position 54 (m5U54) in all tRNAs, and that of position 341 (m5U341) in tmRNA (transfer-mRNA). The protein is tRNA/tmRNA (uracil-C(5))-methyltransferase of Pseudomonas putida (strain ATCC 47054 / DSM 6125 / CFBP 8728 / NCIMB 11950 / KT2440).